A 285-amino-acid chain; its full sequence is MKFTKMHGCGNDYVYVNLFEEKLDDPARVSIYVSDRHFGIGSDGLITIGPSDKADFRMRIYNADGSEAEMCGNGIRCVAKYVYDHKLTDKTEISVETGAGIKYLTLYVEENKVSQVRVDMGEPILTPGDIPVVKADGSAYSDDYRVIDEPISAGNREWHMTCVSMGNPHAVVFVDDVAGFELEKYGPLFENHKMFPKRTNTEFVEILSRNEAKMRVWERGSAETWACGTGTCATVMACILNKKTDNKVLVHLRGGDLTIEYIPETNHVFMTGPATEVFSGEIDII.

Residues Asn-11 and Asn-62 each contribute to the substrate site. Cys-71 (proton donor) is an active-site residue. Substrate-binding positions include 72–73, Asn-167, Asn-200, and 218–219; these read GN and ER. The Proton acceptor role is filled by Cys-227. A substrate-binding site is contributed by 228–229; that stretch reads GT.

This sequence belongs to the diaminopimelate epimerase family. In terms of assembly, homodimer.

Its subcellular location is the cytoplasm. The enzyme catalyses (2S,6S)-2,6-diaminopimelate = meso-2,6-diaminopimelate. Its pathway is amino-acid biosynthesis; L-lysine biosynthesis via DAP pathway; DL-2,6-diaminopimelate from LL-2,6-diaminopimelate: step 1/1. Catalyzes the stereoinversion of LL-2,6-diaminopimelate (L,L-DAP) to meso-diaminopimelate (meso-DAP), a precursor of L-lysine and an essential component of the bacterial peptidoglycan. This Agathobacter rectalis (strain ATCC 33656 / DSM 3377 / JCM 17463 / KCTC 5835 / VPI 0990) (Eubacterium rectale) protein is Diaminopimelate epimerase.